The chain runs to 310 residues: MTTLKGRDFISLHDWSRDELEEVLELAMWQKARLKAGIRDEPLKGKQLGMYFAKPSTRTRLSFEVGIRQLGGDALFLSAHDLQLQRGESIADTARVMSRFLDGIMIRTFSHREVVELAEWATIPVINGLTDEEHPCQVVADLLTALERFGTLPGLKLAYVGDGNNVAHSLMDGGAKFGMHVVVASPEGYQPDPARVARAQVTAARYGGLVEVVTDPVLAVTGAQIVYTDVWASMGQEAEAEQRRKAFAGYQVTAELMRCAAPEAIFMHCLPAHRGEEVAAEVIDGPQSAVFDEAENRLHAQKAIMTLIMA.

Residues 56 to 59, Q83, R107, and 134 to 137 contribute to the carbamoyl phosphate site; these read STRT and HPCQ. L-ornithine-binding positions include N165, D229, and 233–234; that span reads SM. Residues 269–270 and R297 each bind carbamoyl phosphate; that span reads CL.

The protein belongs to the aspartate/ornithine carbamoyltransferase superfamily. OTCase family.

The protein localises to the cytoplasm. The catalysed reaction is carbamoyl phosphate + L-ornithine = L-citrulline + phosphate + H(+). It participates in amino-acid biosynthesis; L-arginine biosynthesis; L-arginine from L-ornithine and carbamoyl phosphate: step 1/3. In terms of biological role, reversibly catalyzes the transfer of the carbamoyl group from carbamoyl phosphate (CP) to the N(epsilon) atom of ornithine (ORN) to produce L-citrulline. This chain is Ornithine carbamoyltransferase, found in Symbiobacterium thermophilum (strain DSM 24528 / JCM 14929 / IAM 14863 / T).